We begin with the raw amino-acid sequence, 200 residues long: Octanoyltransferase (200 aa).

In terms of domain architecture, BPL/LPL catalytic spans 27–200 (GAEDDQLWLV…WAELFSARWR (174 aa)). Residues 66–73 (RGGQITYH), 134–136 (SLG), and 147–149 (GIA) contribute to the substrate site. Cys165 acts as the Acyl-thioester intermediate in catalysis.

The protein belongs to the LipB family.

It is found in the cytoplasm. The catalysed reaction is octanoyl-[ACP] + L-lysyl-[protein] = N(6)-octanoyl-L-lysyl-[protein] + holo-[ACP] + H(+). It functions in the pathway protein modification; protein lipoylation via endogenous pathway; protein N(6)-(lipoyl)lysine from octanoyl-[acyl-carrier-protein]: step 1/2. Catalyzes the transfer of endogenously produced octanoic acid from octanoyl-acyl-carrier-protein onto the lipoyl domains of lipoate-dependent enzymes. Lipoyl-ACP can also act as a substrate although octanoyl-ACP is likely to be the physiological substrate. The polypeptide is Octanoyltransferase (Dichelobacter nodosus (strain VCS1703A)).